A 97-amino-acid polypeptide reads, in one-letter code: Probable gamma-secretase subunit PEN-2 (97 aa).

Residues 1-20 (MLIPEDDKLDDEKMINIAKK) lie on the Cytoplasmic side of the membrane. Positions 21 to 39 (LWFIGFFFLPWVWLINILY) form an intramembrane region, helical. At 40–55 (FIPYRNSLNDKVKWYL) the chain is on the cytoplasmic side. The chain crosses the membrane as a helical span at residues 56 to 76 (KFSLIGFLGYSTIFMGWMGIY). Topologically, residues 77–97 (LVNRNKWGAFGDDISITIPFG) are lumenal.

The protein belongs to the PEN-2 family. The functional gamma-secretase complex is composed of at least four polypeptides: a presenilin homodimer, nicastrin, aph1 and psenen.

It localises to the endoplasmic reticulum membrane. Its subcellular location is the golgi apparatus. It is found in the golgi stack membrane. The protein resides in the cell membrane. The protein localises to the membrane. Essential subunit of the gamma-secretase complex, an endoprotease complex that catalyzes the intramembrane cleavage of integral membrane proteins such as Notch receptors. The gamma-secretase complex plays a role in Notch and Wnt signaling cascades and regulation of downstream processes via its role in processing key regulatory proteins. This Dictyostelium discoideum (Social amoeba) protein is Probable gamma-secretase subunit PEN-2 (psenen).